Here is a 142-residue protein sequence, read N- to C-terminus: ATP synthase epsilon chain (142 aa).

The protein belongs to the ATPase epsilon chain family. F-type ATPases have 2 components, CF(1) - the catalytic core - and CF(0) - the membrane proton channel. CF(1) has five subunits: alpha(3), beta(3), gamma(1), delta(1), epsilon(1). CF(0) has three main subunits: a, b and c.

The protein localises to the cell inner membrane. Functionally, produces ATP from ADP in the presence of a proton gradient across the membrane. The sequence is that of ATP synthase epsilon chain from Shewanella putrefaciens (strain CN-32 / ATCC BAA-453).